Here is a 498-residue protein sequence, read N- to C-terminus: DNA primase (498 aa).

A CHC2-type zinc finger spans residues 35-59 (CPFHPDDTPSFYVSPSKQIFKCFGC). In terms of domain architecture, Toprim spans 243–324 (GFAILVEGYF…EVYPVYLPEG (82 aa)). Mg(2+) contacts are provided by Glu249, Asp293, and Asp295.

It belongs to the DnaG primase family. As to quaternary structure, monomer. Interacts with DnaB. Zn(2+) is required as a cofactor. Requires Mg(2+) as cofactor.

The enzyme catalyses ssDNA + n NTP = ssDNA/pppN(pN)n-1 hybrid + (n-1) diphosphate.. Functionally, RNA polymerase that catalyzes the synthesis of short RNA molecules used as primers for DNA polymerase during DNA replication. The protein is DNA primase of Aquifex aeolicus (strain VF5).